The following is a 51-amino-acid chain: Protein HokD (51 aa).

Residues 5–25 (KAMLIALIVICLTVIVTALVT) traverse the membrane as a helical segment.

This sequence belongs to the Hok/Gef family.

Its subcellular location is the cell inner membrane. Toxic component of a type I toxin-antitoxin (TA) system. When overexpressed kills cells within minutes; causes collapse of the transmembrane potential and arrest of respiration. Its toxic effect is probably neutralized by an antisense antitoxin Sok RNA. This Escherichia coli O157:H7 protein is Protein HokD (hokD).